We begin with the raw amino-acid sequence, 833 residues long: Mannosyl-oligosaccharide glucosidase (833 aa).

Over 1–10 the chain is Cytoplasmic; that stretch reads MLISKSKMFK. Residues 11–28 traverse the membrane as a helical; Signal-anchor for type II membrane protein segment; that stretch reads TFWILTSIVLLASATVDI. The Lumenal portion of the chain corresponds to 29–833; the sequence is SKLQEFEEYQ…ALVVNILGRF (805 aa). Residues N42 and N122 each contribute to the substrate site. N-linked (GlcNAc...) asparagine glycans are attached at residues N42, N122, and N135. E143 provides a ligand contact to substrate. D601 functions as the Proton donor in the catalytic mechanism. C669 and C685 are joined by a disulfide. N-linked (GlcNAc...) asparagine glycosylation occurs at N787. E804 functions as the Proton acceptor in the catalytic mechanism.

It belongs to the glycosyl hydrolase 63 family. In terms of processing, N-glycosylated.

Its subcellular location is the endoplasmic reticulum membrane. It carries out the reaction N(4)-(alpha-D-Glc-(1-&gt;2)-alpha-D-Glc-(1-&gt;3)-alpha-D-Glc-(1-&gt;3)-alpha-D-Man-(1-&gt;2)-alpha-D-Man-(1-&gt;2)-alpha-D-Man-(1-&gt;3)-[alpha-D-Man-(1-&gt;2)-alpha-D-Man-(1-&gt;3)-[alpha-D-Man-(1-&gt;2)-alpha-D-Man-(1-&gt;6)]-alpha-D-Man-(1-&gt;6)]-beta-D-Man-(1-&gt;4)-beta-D-GlcNAc-(1-&gt;4)-beta-D-GlcNAc)-L-asparaginyl-[protein] + H2O = N(4)-(alpha-D-Glc-(1-&gt;3)-alpha-D-Glc-(1-&gt;3)-alpha-D-Man-(1-&gt;2)-alpha-D-Man-(1-&gt;2)-alpha-D-Man-(1-&gt;3)-[alpha-D-Man-(1-&gt;2)-alpha-D-Man-(1-&gt;3)-[alpha-D-Man-(1-&gt;2)-alpha-D-Man-(1-&gt;6)]-alpha-D-Man-(1-&gt;6)]-beta-D-Man-(1-&gt;4)-beta-D-GlcNAc-(1-&gt;4)-beta-D-GlcNAc)-L-asparaginyl-[protein] + beta-D-glucose. The protein operates within glycan metabolism; N-glycan degradation. Miglitol is an effective inhibitor at 1 mM. In terms of biological role, cleaves the distal alpha 1,2-linked glucose residue from the Glc(3)Man(9)GlcNAc(2) oligosaccharide precursor highly specifically. Seems to play a role in beta-1,6-glucan synthesis. The polypeptide is Mannosyl-oligosaccharide glucosidase (CWH41) (Saccharomyces cerevisiae (strain ATCC 204508 / S288c) (Baker's yeast)).